The chain runs to 404 residues: Spore development regulator RYP2 (404 aa).

3 disordered regions span residues 1–46 (MSAP…RKAV), 200–231 (LLKR…SSQQ), and 382–404 (SGQS…PAWG). Positions 17-194 (LQSADFRLTV…ADQGVKLRIR (178 aa)) constitute a Velvet domain. Residues 29–46 (NPERARVAGGKEKERKAV) show a composition bias toward basic and acidic residues. The segment covering 382 to 397 (SGQSFSQSAGHMQSPS) has biased composition (polar residues).

The protein belongs to the velvet family. VosA subfamily. Forms a heterodimeric complex with RYP3; the formation of the RYP2-RYP3 complex is light-dependent.

The protein resides in the nucleus. In terms of biological role, component of the RYP2-RYP3 heterodimeric complex that plays a dual role in activating genes associated with spore maturation and repressing certain development-associated genes. The complex binds DNA through the DNA-binding domain of vosA that recognizes an 11-nucleotide consensus sequence 5'-CTGGCCGCGGC-3' consisting of two motifs in the promoters of key developmental regulatory genes. Required for viable spore production and regulation of sporulation in response to temperature and for the switch to yeast-form in the presence of host cells. This Ajellomyces capsulatus (Darling's disease fungus) protein is Spore development regulator RYP2.